The sequence spans 573 residues: Probable zinc metallopeptidase EGY3, chloroplastic (573 aa).

The N-terminal 50 residues, 1–50, are a transit peptide targeting the chloroplast; it reads MASLFVSTPSSSLTLKSCHSLHLRRFDRAEFSNFGKASVNQTTRSRHSLR. Positions 38–105 are disordered; sequence SVNQTTRSRH…EKKSKQQEMD (68 aa). Composition is skewed to basic and acidic residues over residues 52 to 62 and 96 to 105; these read SAEDDRVREPV and EKKSKQQEMD. The stretch at 122 to 185 forms a coiled coil; sequence EAAIKLEKTR…KALDLNKLKS (64 aa). Helical transmembrane passes span 274–294, 305–325, 376–396, 414–434, 441–461, 493–513, and 536–556; these read VSAI…SGFF, IANV…SEIA, ASAY…DGSF, PLLS…GNVL, VGVP…VTSL, LLLG…GLFA, and FAWG…NSGG.

This sequence belongs to the peptidase M50B family.

The protein resides in the plastid. Its subcellular location is the chloroplast membrane. Probable membrane-associated metalloprotease that may be involved in chloroplast development. The sequence is that of Probable zinc metallopeptidase EGY3, chloroplastic (EGY3) from Arabidopsis thaliana (Mouse-ear cress).